The primary structure comprises 538 residues: Spindle pole body protein CSA6 (538 aa).

Disordered stretches follow at residues 1–31 and 57–129; these read MEDS…TSDL and QNIS…KYQD. Composition is skewed to basic and acidic residues over residues 18-30 and 57-68; these read PEIK…KTSD and QNISDSEHDLTP. Polar residues-rich tracts occupy residues 86 to 96 and 104 to 122; these read KFSSSIPQKPT and TSPT…SGPN. Residues 144–237 are a coiled coil; the sequence is KQEQNLKLEN…RNERDELVKD (94 aa). Over residues 304–323 the composition is skewed to basic and acidic residues; sequence KKISEPSAAVEKDTTSEDKT. Disordered stretches follow at residues 304 to 338 and 355 to 458; these read KKIS…TPRM and SSNN…STKY. Polar residues-rich tracts occupy residues 355 to 392 and 407 to 425; these read SSNN…SAAY and TNFY…QSSQ. Positions 426–444 are enriched in basic and acidic residues; the sequence is SDERPETFELPHVAKDHWL. Residues 446–457 are compositionally biased toward polar residues; sequence RPTSERSTQSTK.

It is found in the cytoplasm. The protein resides in the cytoskeleton. It localises to the microtubule organizing center. The protein localises to the spindle pole body. Functionally, plays a role in mitotic spindle pole body organization, possibly at the point of spindle pole body separation. Required for mitotic exit. This chain is Spindle pole body protein CSA6, found in Candida albicans (strain SC5314 / ATCC MYA-2876) (Yeast).